The chain runs to 203 residues: VPS4-associated protein 1 (203 aa).

The segment covering 99–109 (EKETNNSKDPD) has biased composition (basic and acidic residues). Disordered stretches follow at residues 99–125 (EKETNNSKDPDPTTTDSTDTSPQAKND) and 171–193 (QVNRERYLKEQENYSNTDPEELL). Positions 110 to 120 (PTTTDSTDTSP) are enriched in low complexity. Residues 121-157 (QAKNDAEILSETKKQYSKILDKVTELQRKNRKYELAK) are a coiled coil. Positions 171–182 (QVNRERYLKEQE) are enriched in basic and acidic residues.

In terms of assembly, interacts with VPS4.

The protein localises to the cytoplasm. It is found in the endosome. VPS4-associated protein involved in trafficking to the vacuole. The chain is VPS4-associated protein 1 (VFA1) from Saccharomyces cerevisiae (strain ATCC 204508 / S288c) (Baker's yeast).